Here is a 278-residue protein sequence, read N- to C-terminus: NADPH-dependent 7-cyano-7-deazaguanine reductase (278 aa).

87-89 (IES) lines the substrate pocket. Residue 89 to 90 (SK) participates in NADPH binding. The active-site Thioimide intermediate is Cys185. Asp192 functions as the Proton donor in the catalytic mechanism. A substrate-binding site is contributed by 224–225 (HE). Residue 253–254 (RG) participates in NADPH binding. A disordered region spans residues 255–278 (GLDINPYRSTNPTFSVQNHRSFRQ). Positions 261 to 278 (YRSTNPTFSVQNHRSFRQ) are enriched in polar residues.

Belongs to the GTP cyclohydrolase I family. QueF type 2 subfamily. In terms of assembly, homodimer.

It localises to the cytoplasm. The catalysed reaction is 7-aminomethyl-7-carbaguanine + 2 NADP(+) = 7-cyano-7-deazaguanine + 2 NADPH + 3 H(+). It participates in tRNA modification; tRNA-queuosine biosynthesis. In terms of biological role, catalyzes the NADPH-dependent reduction of 7-cyano-7-deazaguanine (preQ0) to 7-aminomethyl-7-deazaguanine (preQ1). This is NADPH-dependent 7-cyano-7-deazaguanine reductase from Coxiella burnetii (strain CbuG_Q212) (Coxiella burnetii (strain Q212)).